We begin with the raw amino-acid sequence, 269 residues long: Imidazoleglycerol-phosphate dehydratase 1, chloroplastic (269 aa).

2 disordered regions span residues 1–31 (MTTA…GSGG) and 54–73 (SGVG…VSSR). Residues 1–52 (MTTAPFVSPSLPRLHSARASPFPKPSVGSGGGVAFPARTYGSSLRLRSAVMS) constitute a chloroplast transit peptide. Substrate-binding positions include glutamate 83, 109 to 117 (HMLDQLASH), 135 to 139 (HHSNE), arginine 161, and arginine 183. Mn(2+)-binding residues include histidine 109, histidine 135, histidine 136, and glutamate 139. Residues histidine 207, histidine 231, histidine 232, and glutamate 235 each coordinate Mn(2+). Residues 231–239 (HHIIEATFK) and 261–263 (SSK) contribute to the substrate site.

This sequence belongs to the imidazoleglycerol-phosphate dehydratase family. Mn(2+) is required as a cofactor.

It localises to the plastid. The protein resides in the chloroplast. It catalyses the reaction D-erythro-1-(imidazol-4-yl)glycerol 3-phosphate = 3-(imidazol-4-yl)-2-oxopropyl phosphate + H2O. It functions in the pathway amino-acid biosynthesis; L-histidine biosynthesis; L-histidine from 5-phospho-alpha-D-ribose 1-diphosphate: step 6/9. This Triticum aestivum (Wheat) protein is Imidazoleglycerol-phosphate dehydratase 1, chloroplastic.